The sequence spans 326 residues: Peroxidase 39 (326 aa).

A signal peptide spans 1-23 (MTRFGLALLMILVIQGLVTFSEA). 4 disulfide bridges follow: cysteine 34-cysteine 114, cysteine 67-cysteine 72, cysteine 120-cysteine 322, and cysteine 199-cysteine 232. Histidine 65 (proton acceptor) is an active-site residue. 5 residues coordinate Ca(2+): aspartate 66, valine 69, glycine 71, aspartate 73, and serine 75. Asparagine 79 carries N-linked (GlcNAc...) asparagine glycosylation. Residue proline 162 coordinates substrate. An N-linked (GlcNAc...) asparagine glycan is attached at asparagine 167. Residue histidine 192 coordinates heme b. Threonine 193 is a Ca(2+) binding site. N-linked (GlcNAc...) asparagine glycosylation is found at asparagine 208 and asparagine 238. Residues aspartate 245, serine 248, and aspartate 253 each coordinate Ca(2+).

It belongs to the peroxidase family. Classical plant (class III) peroxidase subfamily. Requires heme b as cofactor. Ca(2+) serves as cofactor. Slightly expressed in roots.

It is found in the secreted. The enzyme catalyses 2 a phenolic donor + H2O2 = 2 a phenolic radical donor + 2 H2O. Functionally, removal of H(2)O(2), oxidation of toxic reductants, biosynthesis and degradation of lignin, suberization, auxin catabolism, response to environmental stresses such as wounding, pathogen attack and oxidative stress. These functions might be dependent on each isozyme/isoform in each plant tissue. The polypeptide is Peroxidase 39 (PER39) (Arabidopsis thaliana (Mouse-ear cress)).